The primary structure comprises 353 residues: Heat-inducible transcription repressor HrcA (353 aa).

Belongs to the HrcA family.

Functionally, negative regulator of class I heat shock genes (grpE-dnaK-dnaJ and groELS operons). Prevents heat-shock induction of these operons. In Anaeromyxobacter dehalogenans (strain 2CP-1 / ATCC BAA-258), this protein is Heat-inducible transcription repressor HrcA.